The chain runs to 390 residues: 1-deoxy-D-xylulose 5-phosphate reductoisomerase (390 aa).

Residues Thr-10, Gly-11, Ser-12, Ile-13, Gly-36, Arg-37, Asn-38, and Asn-121 each coordinate NADPH. Lys-122 lines the 1-deoxy-D-xylulose 5-phosphate pocket. Residue Glu-123 coordinates NADPH. Asp-147 lines the Mn(2+) pocket. 1-deoxy-D-xylulose 5-phosphate-binding residues include Ser-148, Glu-149, Ser-173, and His-196. Residue Glu-149 participates in Mn(2+) binding. Gly-202 is a binding site for NADPH. Residues Ser-209, Asn-214, Lys-215, and Glu-218 each contribute to the 1-deoxy-D-xylulose 5-phosphate site. Glu-218 is a Mn(2+) binding site. A disordered region spans residues 367 to 390; that stretch reads AASEHGRREAEKRVGARAHAPAGR. Over residues 370 to 380 the composition is skewed to basic and acidic residues; sequence EHGRREAEKRV.

It belongs to the DXR family. Requires Mg(2+) as cofactor. The cofactor is Mn(2+).

The enzyme catalyses 2-C-methyl-D-erythritol 4-phosphate + NADP(+) = 1-deoxy-D-xylulose 5-phosphate + NADPH + H(+). It functions in the pathway isoprenoid biosynthesis; isopentenyl diphosphate biosynthesis via DXP pathway; isopentenyl diphosphate from 1-deoxy-D-xylulose 5-phosphate: step 1/6. In terms of biological role, catalyzes the NADPH-dependent rearrangement and reduction of 1-deoxy-D-xylulose-5-phosphate (DXP) to 2-C-methyl-D-erythritol 4-phosphate (MEP). The protein is 1-deoxy-D-xylulose 5-phosphate reductoisomerase of Anaeromyxobacter sp. (strain K).